We begin with the raw amino-acid sequence, 159 residues long: Mitotic-spindle organizing protein 2 (159 aa).

The disordered stretch occupies residues 87–159; the sequence is LASDPQDSVP…SGKSNSRSSP (73 aa). A compositionally biased stretch (polar residues) spans 91-105; the sequence is PQDSVPISLSTSTSE. Position 111 is an omega-N-methylarginine (arginine 111). Residue serine 153 is modified to Phosphoserine.

It belongs to the MOZART2 family. In terms of assembly, associates with the gamma-tubulin ring complex (gTuRC) consisting of TUBGCP2, TUBGCP3, TUBGCP4, TUBGCP5 and TUBGCP6 and gamma-tubulin TUBG1 or TUBG2; within the complex, interacts with TUBGCP2; the interaction plays a role in gTuRC activation.

It is found in the cytoplasm. The protein resides in the cytoskeleton. It localises to the microtubule organizing center. Its subcellular location is the centrosome. The protein localises to the spindle. In terms of biological role, required for the recruitment and the assembly of the gamma-tubulin ring complex (gTuRC) at the centrosome. The gTuRC regulates the minus-end nucleation of alpha-beta tubulin heterodimers that grow into microtubule protafilaments, a critical step in centrosome duplication and spindle formation. This is Mitotic-spindle organizing protein 2 (Mzt2) from Mus musculus (Mouse).